The chain runs to 430 residues: Serine hydroxymethyltransferase (430 aa).

(6S)-5,6,7,8-tetrahydrofolate is bound at residue 120-122 (GHI). An N6-(pyridoxal phosphate)lysine modification is found at Lys226.

This sequence belongs to the SHMT family. As to quaternary structure, homodimer. It depends on pyridoxal 5'-phosphate as a cofactor.

The protein localises to the cytoplasm. It participates in amino-acid biosynthesis; glycine biosynthesis; glycine from L-serine: step 1/1. Its function is as follows. Catalyzes the reversible interconversion of serine and glycine with a modified folate serving as the one-carbon carrier. Also exhibits a pteridine-independent aldolase activity toward beta-hydroxyamino acids, producing glycine and aldehydes, via a retro-aldol mechanism. This chain is Serine hydroxymethyltransferase, found in Pyrobaculum islandicum (strain DSM 4184 / JCM 9189 / GEO3).